Consider the following 814-residue polypeptide: Putative serine/threonine-protein kinase-like protein CCR3 (814 aa).

Positions 1-30 (MKRFINSTVTFSVTVTIAVIIFFLLSPVTS) are cleaved as a signal peptide. Residues Asn-6, Asn-68, Asn-136, Asn-215, Asn-226, Asn-251, Asn-260, Asn-275, Asn-299, and Asn-309 are each glycosylated (N-linked (GlcNAc...) asparagine). At 31-393 (LGSGSTYAVV…SSPPSKALTR (363 aa)) the chain is on the extracellular side. Positions 366 to 381 (SQFPLPPPPPPPPPSP) are enriched in pro residues. The disordered stretch occupies residues 366-388 (SQFPLPPPPPPPPPSPSTSSPPS). Residues 394 to 414 (GLLAFAIVGSVGAFAGICSVV) form a helical membrane-spanning segment. The Cytoplasmic portion of the chain corresponds to 415–814 (YCLWTGVCLG…SSGICSIVSD (400 aa)). The tract at residues 433–478 (QPTITRGGSNSRSNSSNSRSLSIRRQGSRMLSMRRQRSGTSSMKHA) is disordered. The segment covering 441–457 (SNSRSNSSNSRSLSIRR) has biased composition (low complexity). A Protein kinase domain is found at 496-794 (FSLENKIGSG…DIVGNLERAL (299 aa)). ATP is bound by residues 502–510 (IGSGSFGVV) and Lys-524. Asp-631 functions as the Proton acceptor in the catalytic mechanism.

Belongs to the protein kinase superfamily. Ser/Thr protein kinase family. As to quaternary structure, homodimer. In terms of tissue distribution, expressed in roots, leaves, shoot apical meristems (SAM), and floral buds.

Its subcellular location is the membrane. The enzyme catalyses L-seryl-[protein] + ATP = O-phospho-L-seryl-[protein] + ADP + H(+). It carries out the reaction L-threonyl-[protein] + ATP = O-phospho-L-threonyl-[protein] + ADP + H(+). Serine/threonine-protein kinase. The chain is Putative serine/threonine-protein kinase-like protein CCR3 (CCR3) from Arabidopsis thaliana (Mouse-ear cress).